Consider the following 729-residue polypeptide: uncharacterized protein (729 aa).

This is an uncharacterized protein from Caenorhabditis elegans.